The following is an 842-amino-acid chain: Oleate activated transcription factor 3 (842 aa).

Residues 22–50 (CTNCKRRKSKCDRQNPCSNCVRFGNKDTC) constitute a DNA-binding region (zn(2)-C6 fungal-type). The interval 55-101 (NPKNTESQHGEDTDNKVKKQQPQMIKGKRNGTSSSIVGSKASSISPT) is disordered. Positions 60–71 (ESQHGEDTDNKV) are enriched in basic and acidic residues. Low complexity predominate over residues 87-99 (SSSIVGSKASSIS).

The protein belongs to the OAF3 family.

It is found in the cytoplasm. The protein localises to the nucleus. The protein resides in the mitochondrion. Transcriptional inhibitor with a significantly increased number of target genes in response to oleate. In Zygosaccharomyces rouxii (strain ATCC 2623 / CBS 732 / NBRC 1130 / NCYC 568 / NRRL Y-229), this protein is Oleate activated transcription factor 3 (OAF3).